Consider the following 106-residue polypeptide: MKTFLLYAVTAVAEIVGCYLPWRWLKEGGSIWLLVPGALSLALFAWLLTLHGTAAGRVYAAYGGVYVAVAIAWLWCVDKVRPTLWDAAGVVFTLAGMAIIAFQPRV.

Helical transmembrane passes span 2 to 22 (KTFL…YLPW), 30 to 50 (SIWL…LLTL), 58 to 78 (VYAA…WCVD), and 82 to 102 (PTLW…IIAF).

The protein belongs to the UPF0060 family.

It localises to the cell inner membrane. In Paraburkholderia xenovorans (strain LB400), this protein is UPF0060 membrane protein Bxeno_B1021.